The sequence spans 548 residues: Inosine-5'-monophosphate dehydrogenase (548 aa).

CBS domains are found at residues 121–201 (FILD…EDPV) and 205–261 (MSTE…PLAS). Residues 298-300 (DSS) and 348-350 (GMG) contribute to the NAD(+) site. 2 residues coordinate K(+): Gly-350 and Gly-352. Residue Ser-353 participates in IMP binding. Cys-355 provides a ligand contact to K(+). Cys-355 functions as the Thioimidate intermediate in the catalytic mechanism. IMP-binding positions include 388–390 (DGG) and 411–412 (GS). The active-site Proton acceptor is the Arg-461. Position 473 (Gln-473) interacts with IMP. Residues 527–548 (ASAQTEGNVHGLHSHEKKLYSS) are disordered. Ser-528 serves as a coordination point for K(+). Residues 539 to 548 (HSHEKKLYSS) show a composition bias toward basic and acidic residues.

Belongs to the IMPDH/GMPR family. In terms of assembly, homotetramer. K(+) is required as a cofactor.

It is found in the cytoplasm. The enzyme catalyses IMP + NAD(+) + H2O = XMP + NADH + H(+). It functions in the pathway purine metabolism; XMP biosynthesis via de novo pathway; XMP from IMP: step 1/1. With respect to regulation, mycophenolic acid (MPA) is a non-competitive inhibitor that prevents formation of the closed enzyme conformation by binding to the same site as the amobile flap. In contrast, mizoribine monophosphate (MZP) is a competitive inhibitor that induces the closed conformation. MPA is a potent inhibitor of mammalian IMPDHs but a poor inhibitor of the bacterial enzymes. MZP is a more potent inhibitor of bacterial IMPDH. Its function is as follows. Catalyzes the conversion of inosine 5'-phosphate (IMP) to xanthosine 5'-phosphate (XMP), the first committed and rate-limiting step in the de novo synthesis of guanine nucleotides, and therefore plays an important role in the regulation of cell growth. Part of the gene cluster that mediates the biosynthesis of mycophenolic acid (MPA), the first isolated antibiotic natural product in the world. Does not play a role in the biosynthesis of MPA, but is involved in self resistance to MPA, since MPA acts as an inhibitor of IMP dehydrogenases. The sequence is that of Inosine-5'-monophosphate dehydrogenase from Penicillium brevicompactum.